The chain runs to 120 residues: NAD(P)H-quinone oxidoreductase subunit 3, organellar chromatophore (120 aa).

A run of 3 helical transmembrane segments spans residues glycine 6 to leucine 26, methionine 64 to valine 84, and leucine 89 to alanine 109.

Belongs to the complex I subunit 3 family. In terms of assembly, NDH is composed of at least 16 different subunits, 5 of which are encoded in the nucleus.

It localises to the plastid. Its subcellular location is the organellar chromatophore thylakoid membrane. The catalysed reaction is a plastoquinone + NADH + (n+1) H(+)(in) = a plastoquinol + NAD(+) + n H(+)(out). It carries out the reaction a plastoquinone + NADPH + (n+1) H(+)(in) = a plastoquinol + NADP(+) + n H(+)(out). In terms of biological role, NDH shuttles electrons from NAD(P)H:plastoquinone, via FMN and iron-sulfur (Fe-S) centers, to quinones in the photosynthetic chain and possibly in a chloroplast respiratory chain. The immediate electron acceptor for the enzyme in this species is believed to be plastoquinone. Couples the redox reaction to proton translocation, and thus conserves the redox energy in a proton gradient. In Paulinella chromatophora, this protein is NAD(P)H-quinone oxidoreductase subunit 3, organellar chromatophore.